The sequence spans 57 residues: UPF0391 membrane protein Arad_3976 (57 aa).

2 helical membrane passes run 4-24 (WAII…SGVS) and 33-53 (VLFA…VMAG).

The protein belongs to the UPF0391 family.

It is found in the cell membrane. In Rhizobium rhizogenes (strain K84 / ATCC BAA-868) (Agrobacterium radiobacter), this protein is UPF0391 membrane protein Arad_3976.